Here is a 419-residue protein sequence, read N- to C-terminus: S-adenosylmethionine synthase (419 aa).

Histidine 14 is an ATP binding site. Aspartate 16 provides a ligand contact to Mg(2+). Glutamate 42 is a K(+) binding site. Glutamate 55 and glutamine 98 together coordinate L-methionine. Positions 98–108 (QSQDIYQGVDR) are flexible loop. ATP-binding positions include 164-166 (DSK), 242-243 (KF), aspartate 251, 257-258 (RK), alanine 274, and lysine 278. Aspartate 251 contributes to the L-methionine binding site. Residue lysine 282 coordinates L-methionine.

This sequence belongs to the AdoMet synthase family. In terms of assembly, homotetramer; dimer of dimers. Mg(2+) serves as cofactor. K(+) is required as a cofactor.

Its subcellular location is the cytoplasm. It catalyses the reaction L-methionine + ATP + H2O = S-adenosyl-L-methionine + phosphate + diphosphate. It functions in the pathway amino-acid biosynthesis; S-adenosyl-L-methionine biosynthesis; S-adenosyl-L-methionine from L-methionine: step 1/1. Functionally, catalyzes the formation of S-adenosylmethionine (AdoMet) from methionine and ATP. The overall synthetic reaction is composed of two sequential steps, AdoMet formation and the subsequent tripolyphosphate hydrolysis which occurs prior to release of AdoMet from the enzyme. The chain is S-adenosylmethionine synthase from Christiangramia forsetii (strain DSM 17595 / CGMCC 1.15422 / KT0803) (Gramella forsetii).